Consider the following 251-residue polypeptide: Ubiquinone/menaquinone biosynthesis C-methyltransferase UbiE (251 aa).

S-adenosyl-L-methionine is bound by residues T74, D95, and 123–124 (NA).

Belongs to the class I-like SAM-binding methyltransferase superfamily. MenG/UbiE family.

It catalyses the reaction a 2-demethylmenaquinol + S-adenosyl-L-methionine = a menaquinol + S-adenosyl-L-homocysteine + H(+). It carries out the reaction a 2-methoxy-6-(all-trans-polyprenyl)benzene-1,4-diol + S-adenosyl-L-methionine = a 5-methoxy-2-methyl-3-(all-trans-polyprenyl)benzene-1,4-diol + S-adenosyl-L-homocysteine + H(+). The protein operates within quinol/quinone metabolism; menaquinone biosynthesis; menaquinol from 1,4-dihydroxy-2-naphthoate: step 2/2. It functions in the pathway cofactor biosynthesis; ubiquinone biosynthesis. Functionally, methyltransferase required for the conversion of demethylmenaquinol (DMKH2) to menaquinol (MKH2) and the conversion of 2-polyprenyl-6-methoxy-1,4-benzoquinol (DDMQH2) to 2-polyprenyl-3-methyl-6-methoxy-1,4-benzoquinol (DMQH2). In Shewanella baltica (strain OS223), this protein is Ubiquinone/menaquinone biosynthesis C-methyltransferase UbiE.